The chain runs to 338 residues: MGTDIGDLLQKRKIELSDLSNRVVAVDAFNTLHQFLSIIRQRDGSPLVNSRGKVTSHLSGLLYRTASLVEAGIKPVFIFDGKPPDLKSETLSRRKEVRETSLEKWENAKAEGDLEAAYKYAQASSRVDQEIVEDSKYLLGIMGIPWIQAPCEGEAQAAHMVLKKDADYVASQDYDSFLFGAPKVVRNMAVTGKRKLPGKNVYVDVELEVIELEETLRALEINRDQLIDIAICVGTDYNKGLEKVGPKTALKLIKKHGDIHAVLREKDMEIEGLDRIRKLFTHPEVTEDYEIKWTKPDSEKLIKFLCEENDFSTDRVEKAAERLKAASGARQKTLDQWF.

The segment at 1 to 98 (MGTDIGDLLQ…ETLSRRKEVR (98 aa)) is N-domain. The Mg(2+) site is built by aspartate 27, aspartate 80, glutamate 152, glutamate 154, aspartate 173, aspartate 175, and aspartate 236. The segment at 116 to 257 (AAYKYAQASS…TALKLIKKHG (142 aa)) is I-domain. The tract at residues 330–338 (RQKTLDQWF) is interaction with PCNA.

This sequence belongs to the XPG/RAD2 endonuclease family. FEN1 subfamily. Interacts with PCNA. PCNA stimulates the nuclease activity without altering cleavage specificity. Requires Mg(2+) as cofactor.

Its function is as follows. Structure-specific nuclease with 5'-flap endonuclease and 5'-3' exonuclease activities involved in DNA replication and repair. During DNA replication, cleaves the 5'-overhanging flap structure that is generated by displacement synthesis when DNA polymerase encounters the 5'-end of a downstream Okazaki fragment. Binds the unpaired 3'-DNA end and kinks the DNA to facilitate 5' cleavage specificity. Cleaves one nucleotide into the double-stranded DNA from the junction in flap DNA, leaving a nick for ligation. Also involved in the base excision repair (BER) pathway. Acts as a genome stabilization factor that prevents flaps from equilibrating into structures that lead to duplications and deletions. Also possesses 5'-3' exonuclease activity on nicked or gapped double-stranded DNA. This Methanosarcina acetivorans (strain ATCC 35395 / DSM 2834 / JCM 12185 / C2A) protein is Flap endonuclease 1.